A 947-amino-acid polypeptide reads, in one-letter code: Plasma membrane ATPase 2 (947 aa).

A disordered region spans residues 1–103 (MSSTEAKQYK…TDGVHAGQRV (103 aa)). The Cytoplasmic portion of the chain corresponds to 1-144 (MSSTEAKQYK…AEENESLIVK (144 aa)). A compositionally biased stretch (basic and acidic residues) spans 7-22 (KQYKEKPSKEYLHASD). A compositionally biased stretch (low complexity) spans 26–61 (PANNSAASSSSSSSTSTSASSSAAAVPRKAAAASAA). Residues 62–74 (DDSDSDEDIDQLI) show a composition bias toward acidic residues. Residues 145-165 (FLMFFVGPIQFVMEAAAILAA) traverse the membrane as a helical segment. Over 166–169 (GLSD) the chain is Extracellular. A helical membrane pass occupies residues 170–189 (WVDVGVICALLLLNASVGFI). Over 190–320 (QEFQAGSIVD…VEGHFTEVLN (131 aa)) the chain is Cytoplasmic. The chain crosses the membrane as a helical span at residues 321 to 342 (GIGIILLVLVIATLLLVWTACF). The Extracellular segment spans residues 343–353 (YRTVGIVSILR). Residues 354-376 (YTLGITIIGVPVGLPAVVTTTMA) traverse the membrane as a helical segment. Topologically, residues 377–748 (VGAAYLAKKQ…IAILNNSLDI (372 aa)) are cytoplasmic. Asp-407 (4-aspartylphosphate intermediate) is an active-site residue. Positions 663 and 667 each coordinate Mg(2+). The chain crosses the membrane as a helical span at residues 749 to 767 (NLIVFIAIFADVATLTIAY). Over 768-783 (DNAPYAPEPVKWNLPR) the chain is Extracellular. A helical membrane pass occupies residues 784–803 (LWGMSIILGIVLAIGSWITL). Topologically, residues 804–853 (TTMFLPNGGIIQNFGAMNGVMFLQISLTENWLIFVTRAAGPFWSSIPSWQ) are cytoplasmic. The chain crosses the membrane as a helical span at residues 854–874 (LAGAVFAVDIIATMFTLFGWW). Over 875 to 886 (SENWTDIVSVVR) the chain is Extracellular. The helical transmembrane segment at 887 to 903 (VWIWSIGIFCVLGGFYY) threads the bilayer. Topologically, residues 904–947 (IMSTSQAFDRLMNGKSLKEKKSTRSVEDFMAAMQRVSTQHEKSS) are cytoplasmic.

It belongs to the cation transport ATPase (P-type) (TC 3.A.3) family. Type IIIA subfamily.

The protein localises to the cell membrane. The enzyme catalyses ATP + H2O + H(+)(in) = ADP + phosphate + 2 H(+)(out). In terms of biological role, the plasma membrane ATPase of plants and fungi is a hydrogen ion pump. The proton gradient it generates drives the active transport of nutrients by H(+)-symport. The resulting external acidification and/or internal alkinization may mediate growth responses. This chain is Plasma membrane ATPase 2 (PMA2), found in Saccharomyces cerevisiae (strain ATCC 204508 / S288c) (Baker's yeast).